Here is a 385-residue protein sequence, read N- to C-terminus: Glucans biosynthesis protein C (385 aa).

10 helical membrane-spanning segments follow: residues 17–37 (AWLMLLGIPFHISLIYSSHTW), 60–80 (MLVFFVISGYFSYMLFLRYPL), 91–111 (VGIPMLTAIPLLTLPQFIMLQ), 137–157 (ISHLWFLLVLVVMTTLCVWIF), 173–193 (KFSMVKLSVIFLCLGIGYAVI), 212–232 (FIVMQTLFYLPFFILGALAFI), 239–259 (LFTTPSRGCTLAAALAFVAYL), 274–294 (TESVITMVLGLWMVNVVFSFG), 311–331 (ASLFIYLVHHPLTLFFGAYIT), and 338–358 (WLGFLCGLIFVVGIAIILYEI).

It belongs to the acyltransferase 3 family. OpgC subfamily.

It is found in the cell membrane. The protein operates within glycan metabolism; osmoregulated periplasmic glucan (OPG) biosynthesis. In terms of biological role, necessary for the succinyl substitution of periplasmic glucans. Could catalyze the transfer of succinyl residues from the cytoplasmic side of the membrane to the nascent glucan backbones on the periplasmic side of the membrane. The sequence is that of Glucans biosynthesis protein C from Shigella boydii serotype 4 (strain Sb227).